The chain runs to 338 residues: NADPH dehydrogenase (338 aa).

Tyrosine 28 is a binding site for substrate. The FMN site is built by alanine 60 and glutamine 102. 164–167 lines the substrate pocket; that stretch reads HAAH. FMN is bound by residues arginine 215 and 307–308; that span reads AR.

The protein belongs to the NADH:flavin oxidoreductase/NADH oxidase family. NamA subfamily. Homotetramer. It depends on FMN as a cofactor.

It catalyses the reaction A + NADPH + H(+) = AH2 + NADP(+). Catalyzes the reduction of the double bond of an array of alpha,beta-unsaturated aldehydes and ketones. It also reduces the nitro group of nitroester and nitroaromatic compounds. It could have a role in detoxification processes. The polypeptide is NADPH dehydrogenase (Bacillus velezensis (strain DSM 23117 / BGSC 10A6 / LMG 26770 / FZB42) (Bacillus amyloliquefaciens subsp. plantarum)).